A 619-amino-acid polypeptide reads, in one-letter code: Dihydroxy-acid dehydratase (619 aa).

Mg(2+) is bound at residue Asp81. Cys122 lines the [2Fe-2S] cluster pocket. Residues Asp123 and Lys124 each contribute to the Mg(2+) site. At Lys124 the chain carries N6-carboxylysine. Cys198 provides a ligand contact to [2Fe-2S] cluster. Position 494 (Glu494) interacts with Mg(2+). The Proton acceptor role is filled by Ser520.

This sequence belongs to the IlvD/Edd family. In terms of assembly, homodimer. [2Fe-2S] cluster is required as a cofactor. The cofactor is Mg(2+).

It catalyses the reaction (2R)-2,3-dihydroxy-3-methylbutanoate = 3-methyl-2-oxobutanoate + H2O. It carries out the reaction (2R,3R)-2,3-dihydroxy-3-methylpentanoate = (S)-3-methyl-2-oxopentanoate + H2O. Its pathway is amino-acid biosynthesis; L-isoleucine biosynthesis; L-isoleucine from 2-oxobutanoate: step 3/4. The protein operates within amino-acid biosynthesis; L-valine biosynthesis; L-valine from pyruvate: step 3/4. Functions in the biosynthesis of branched-chain amino acids. Catalyzes the dehydration of (2R,3R)-2,3-dihydroxy-3-methylpentanoate (2,3-dihydroxy-3-methylvalerate) into 2-oxo-3-methylpentanoate (2-oxo-3-methylvalerate) and of (2R)-2,3-dihydroxy-3-methylbutanoate (2,3-dihydroxyisovalerate) into 2-oxo-3-methylbutanoate (2-oxoisovalerate), the penultimate precursor to L-isoleucine and L-valine, respectively. This chain is Dihydroxy-acid dehydratase, found in Neisseria meningitidis serogroup C / serotype 2a (strain ATCC 700532 / DSM 15464 / FAM18).